The chain runs to 103 residues: Small ribosomal subunit protein uS10 (103 aa).

This sequence belongs to the universal ribosomal protein uS10 family. In terms of assembly, part of the 30S ribosomal subunit.

Functionally, involved in the binding of tRNA to the ribosomes. The polypeptide is Small ribosomal subunit protein uS10 (Neisseria meningitidis serogroup C / serotype 2a (strain ATCC 700532 / DSM 15464 / FAM18)).